Here is a 126-residue protein sequence, read N- to C-terminus: Small ribosomal subunit protein uS13c (126 aa).

Positions 100-126 (GQRTRTNARTRRGARQTVAGKKKAPSK) are disordered. Positions 101–126 (QRTRTNARTRRGARQTVAGKKKAPSK) are enriched in basic residues.

It belongs to the universal ribosomal protein uS13 family. In terms of assembly, part of the 30S ribosomal subunit.

The protein localises to the plastid. The protein resides in the cyanelle. Functionally, located at the top of the head of the 30S subunit, it contacts several helices of the 16S rRNA. The protein is Small ribosomal subunit protein uS13c of Cyanophora paradoxa.